Reading from the N-terminus, the 312-residue chain is Urease accessory protein UreD (312 aa).

A compositionally biased stretch (basic and acidic residues) spans 1–15 (MLAEQFTDKNKHAEQ). Residues 1-24 (MLAEQFTDKNKHAEQELSPGSSAV) are disordered.

The protein belongs to the UreD family. In terms of assembly, ureD, UreF and UreG form a complex that acts as a GTP-hydrolysis-dependent molecular chaperone, activating the urease apoprotein by helping to assemble the nickel containing metallocenter of UreC. The UreE protein probably delivers the nickel.

The protein resides in the cytoplasm. Its function is as follows. Required for maturation of urease via the functional incorporation of the urease nickel metallocenter. The polypeptide is Urease accessory protein UreD (Hahella chejuensis (strain KCTC 2396)).